A 158-amino-acid chain; its full sequence is Botcinic acid biosynthesis cluster B protein 16 (158 aa).

Its pathway is polyketide biosynthesis. Its function is as follows. Part of the gene cluster B that mediates the biosynthesis of botcinic acid and its botcinin derivatives, acetate-derived polyketides that contribute to virulence when combined with the sesquiterpene botrydial. Botcinic acid and its derivatives have been shown to induce chlorosis and necrosis during host plant infection, but also have antifungal activities. Two polyketide synthases, BOA6 and BOA9, are involved in the biosynthesis of botcinins. BOA6 mediates the formation of the per-methylated tetraketide core by condensation of four units of malonyl-CoA with one unit of acetyl-CoA, which would be methylated in activated methylene groups to yield a bicyclic acid intermediate that could then either be converted to botrylactone derivatives or lose the starter acetate unit through a retro-Claisen type C-C bond cleavage to yield botcinin derivatives. The second polyketide synthase, BOA9, is probably required for the biosynthesis of the tetraketide side chain of botcinins. The methyltransferase (MT) domain within BOA6 is probably responsible for the incorporation of four methyl groups. The trans-enoyl reductase BOA5 might take over the enoyl reductase function of BOA6 that misses an ER domain. The monooxygenases BOA2, BOA3 and BOA4 might be involved in further hydroxylations at C4, C5 and C8, whereas BOA7, close to BOA9, could potentially be involved in the hydroxylation at C4 in the side chain of botcinins. The sequence is that of Botcinic acid biosynthesis cluster B protein 16 from Botryotinia fuckeliana (strain B05.10) (Noble rot fungus).